An 87-amino-acid chain; its full sequence is U14-lycotoxin-Ls1c (87 aa).

A signal peptide spans 1 to 20 (MNSKVFAVLLLLALLTCILS). The WAP domain maps to 21–66 (EKYCPTPRNTSCKKMNIKNNCCRDSDCTSNAFCCAEPCGNFCHKAS). Disulfide bonds link Cys-24–Cys-54, Cys-32–Cys-58, Cys-41–Cys-53, Cys-42–Cys-80, and Cys-47–Cys-62.

Belongs to the venom protein 11 family. 01 (wap-1) subfamily. Post-translationally, contains 5 disulfide bonds. Expressed by the venom gland.

The protein resides in the secreted. In terms of biological role, has antibacterial activity. In Lycosa singoriensis (Wolf spider), this protein is U14-lycotoxin-Ls1c.